Here is a 120-residue protein sequence, read N- to C-terminus: Insoluble matrix shell protein 2 (120 aa).

Residues 1–20 (MHQSSLGVLVLFSLIYLCIS) form the signal peptide.

Component of the acid-insoluble organic matrix of the calcified shell.

Its subcellular location is the secreted. This Ruditapes philippinarum (Japanese carpet shell) protein is Insoluble matrix shell protein 2.